A 264-amino-acid polypeptide reads, in one-letter code: Sororin (264 aa).

A disordered region spans residues 1–45; that stretch reads MAERRTRSGGAAQRSGPRTSLTKPSKSSKRKSGSDLPNSFSEIWP. A phosphoserine mark is found at Ser-20, Ser-32, Ser-34, Ser-78, and Ser-82. Positions 87 to 89 match the KEN box motif; the sequence is KEN. Thr-97 carries the post-translational modification Phosphothreonine. The residue at position 106 (Ser-106) is a Phosphoserine. 3 positions are modified to phosphothreonine: Thr-110, Thr-114, and Thr-159. An FGF motif motif is present at residues 166–168; sequence FGF. At Ser-222 the chain carries Phosphoserine. The interval 242 to 264 is C-terminal Sororin domain; it reads LDKWAVAMNAEFEAAEQFELLIE.

This sequence belongs to the sororin family. As to quaternary structure, interacts with the APC/C complex. Interacts with the chromatin-bound cohesin complex; the interaction is indirect, occurs after DNA replication and requires acetylation of the cohesin component SMC3. Interacts (via the FGF motif) with PDS5A and PDS5B; the interaction is direct and prevents the interaction of PDS5A with WAPL. In terms of processing, phosphorylated. Phosphorylation, as cells enter mitosis, disrupts the interaction with PDS5A and relieves the inhibition of WAPL by CDCA5. Post-translationally, ubiquitinated by the APC/C complex in G1, leading to its degradation.

The protein resides in the nucleus. The protein localises to the chromosome. It is found in the cytoplasm. Its function is as follows. Regulator of sister chromatid cohesion in mitosis stabilizing cohesin complex association with chromatin. May antagonize the action of WAPL which stimulates cohesin dissociation from chromatin. Cohesion ensures that chromosome partitioning is accurate in both meiotic and mitotic cells and plays an important role in DNA repair. Required for efficient DNA double-stranded break repair. The polypeptide is Sororin (Cdca5) (Mus musculus (Mouse)).